The following is a 364-amino-acid chain: Popeye domain-containing protein 2 (364 aa).

N-linked (GlcNAc...) asparagine glycosylation is present at N4. The next 2 helical transmembrane spans lie at L37–L57 and I77–Y97. Residues A276–S333 form a disordered region. Polar residues predominate over residues T300 to P309. T361 bears the Phosphothreonine mark.

It belongs to the popeye family. Expressed predominantly in the heart and in the skeletal muscle.

It localises to the membrane. It is found in the cell membrane. Its subcellular location is the sarcolemma. Important for the maintenance of cardiac function. Plays a regulatory function in heart rate dynamics mediated, at least in part, through cAMP-binding and, probably, by increasing cell surface expression of the potassium channel KCNK2 and enhancing current density. The protein is Popeye domain-containing protein 2 (POPDC2) of Homo sapiens (Human).